A 410-amino-acid chain; its full sequence is Phytoene synthase 1, chloroplastic (410 aa).

Residues 1 to 62 (MAIILVRAAS…EAGRPSPAVY (62 aa)) constitute a chloroplast transit peptide.

The protein belongs to the phytoene/squalene synthase family. As to quaternary structure, monomer. Expressed in embryos, endosperm and seedling leaves. Expressed in leaves and endosperm.

It is found in the plastid. The protein localises to the chloroplast stroma. It catalyses the reaction 2 (2E,6E,10E)-geranylgeranyl diphosphate = 15-cis-phytoene + 2 diphosphate. Its pathway is carotenoid biosynthesis; phytoene biosynthesis; all-trans-phytoene from geranylgeranyl diphosphate: step 1/1. Its function is as follows. Catalyzes the conversion of geranylgeranyl diphosphate to phytoene. Mediates the first committed step in carotenoid biosynthesis. This Zea mays (Maize) protein is Phytoene synthase 1, chloroplastic.